Here is a 676-residue protein sequence, read N- to C-terminus: Translation initiation factor IF-2, mitochondrial (676 aa).

The region spanning 143–326 (KRAPVVTIMG…MDIRAENSPK (184 aa)) is the tr-type G domain. The tract at residues 152-159 (GHVDHGKT) is G1. 152–159 (GHVDHGKT) serves as a coordination point for GTP. The interval 177–181 (GITQH) is G2. GTP-binding positions include 200–203 (DTPG) and 254–257 (TKID). Residues 200–203 (DTPG) form a G3 region. The G4 stretch occupies residues 254–257 (TKID). The tract at residues 296-298 (SAK) is G5.

This sequence belongs to the TRAFAC class translation factor GTPase superfamily. Classic translation factor GTPase family. IF-2 subfamily.

The protein resides in the mitochondrion. One of the essential components for the initiation of protein synthesis. Protects formylmethionyl-tRNA from spontaneous hydrolysis and promotes its binding to the 30S ribosomal subunits. Also involved in the hydrolysis of GTP during the formation of the 70S ribosomal complex. The polypeptide is Translation initiation factor IF-2, mitochondrial (IFM1) (Saccharomyces cerevisiae (strain ATCC 204508 / S288c) (Baker's yeast)).